We begin with the raw amino-acid sequence, 362 residues long: 2-aminoethylphosphonate--pyruvate transaminase (362 aa).

An N6-(pyridoxal phosphate)lysine modification is found at Lys-193.

This sequence belongs to the class-V pyridoxal-phosphate-dependent aminotransferase family. PhnW subfamily. As to quaternary structure, homodimer. Pyridoxal 5'-phosphate serves as cofactor.

It carries out the reaction (2-aminoethyl)phosphonate + pyruvate = phosphonoacetaldehyde + L-alanine. Functionally, involved in phosphonate degradation. This is 2-aminoethylphosphonate--pyruvate transaminase from Bacteroides fragilis (strain ATCC 25285 / DSM 2151 / CCUG 4856 / JCM 11019 / LMG 10263 / NCTC 9343 / Onslow / VPI 2553 / EN-2).